The primary structure comprises 285 residues: MADITAALVKELRERTGAGMMECKKALVEAQGDIELAIDNMRKSGQAKAAKKAGRVAAEGVILTKIAQDGKYGVIIELNCETDFVAKDGGFKAFGDEVITAALNERITDVEALKAKFEEQRTALVAKISENINIRRLGVLEGGVLGSYLHGARIGVMVSAAGADEELVKHVAMHIAASKPEYVNADDVPADVVAREHQIQLDIAMQSGKPREIAEKMVEGRMRKFTGEISLTGQHFVMDPSKTVGQLLGEHGAKINNFIRFEVGEGIEKAEVDFAAEVAAMGKQF.

Residues 82 to 85 (TDFV) form an involved in Mg(2+) ion dislocation from EF-Tu region.

It belongs to the EF-Ts family.

The protein localises to the cytoplasm. Functionally, associates with the EF-Tu.GDP complex and induces the exchange of GDP to GTP. It remains bound to the aminoacyl-tRNA.EF-Tu.GTP complex up to the GTP hydrolysis stage on the ribosome. The chain is Elongation factor Ts from Sodalis glossinidius (strain morsitans).